The chain runs to 132 residues: Small ribosomal subunit protein uS8 (132 aa).

This sequence belongs to the universal ribosomal protein uS8 family. In terms of assembly, part of the 30S ribosomal subunit. Contacts proteins S5 and S12.

In terms of biological role, one of the primary rRNA binding proteins, it binds directly to 16S rRNA central domain where it helps coordinate assembly of the platform of the 30S subunit. The protein is Small ribosomal subunit protein uS8 of Streptococcus gordonii (strain Challis / ATCC 35105 / BCRC 15272 / CH1 / DL1 / V288).